A 405-amino-acid polypeptide reads, in one-letter code: Calsequestrin-1 (405 aa).

Positions 1–34 (MRATDRMGARAVSELRLALLFVLVLGTPRLGVQG) are cleaved as a signal peptide. Position 43 is a phosphotyrosine (Tyr-43). Ser-81 bears the Phosphoserine mark. The residue at position 124 (Thr-124) is a Phosphothreonine. Ser-216 carries the phosphoserine modification. An N-linked (GlcNAc...) asparagine glycan is attached at Asn-350. The interval 382 to 405 (EGEINTEDDDDDDDDDDDDDDDDD) is disordered.

Belongs to the calsequestrin family. In terms of assembly, monomer; increases in response to a depletion of intracellular calcium. Homodimer. Homotetramer and homopolymer. Can form linear homooligomers. Ca(2+) ions promote oligomerization. Interacts (via C-terminal end and preferentially with the monomeric form) with STIM1; this interaction increases in response to a depletion of intracellular calcium, decreases both STIM1 aggregation and clustering, interaction of STIM1 with ORAI1 and store-operated Ca(2+) entry (SOCE) activity. Interacts with ASPH and TRDN. In terms of processing, N-glycosylated. In terms of tissue distribution, detected in skeletal muscle (at protein level). Detected in skeletal muscle.

It localises to the endoplasmic reticulum. The protein localises to the sarcoplasmic reticulum. Its subcellular location is the sarcoplasmic reticulum lumen. The protein resides in the sarcoplasmic reticulum membrane. It is found in the mitochondrion matrix. Calsequestrin is a high-capacity, moderate affinity, calcium-binding protein and thus acts as an internal calcium store in muscle. Calcium ions are bound by clusters of acidic residues at the protein surface, often at the interface between subunits. Can bind around 80 Ca(2+) ions. Regulates the release of lumenal Ca(2+) via the calcium release channel RYR1; this plays an important role in triggering muscle contraction. Negatively regulates store-operated Ca(2+) entry (SOCE) activity. The polypeptide is Calsequestrin-1 (Casq1) (Mus musculus (Mouse)).